An 875-amino-acid chain; its full sequence is Protein HIR2 (875 aa).

WD repeat units lie at residues isoleucine 10 to phenylalanine 47, lysine 118 to glutamate 158, lysine 163 to leucine 201, proline 237 to tyrosine 277, glutamate 278 to asparagine 316, and valine 320 to alanine 359. A disordered region spans residues glutamate 398–lysine 473. The segment covering alanine 424 to tyrosine 446 has biased composition (polar residues). WD repeat units follow at residues leucine 546–proline 587 and valine 589–proline 626. Serine 713 is subject to Phosphoserine.

It belongs to the WD repeat HIR1 family. As to quaternary structure, component of the HIR complex, composed of HIR1, HIR2, HIR3 and HPC2. This complex may consist of one copy of HIR1 and HIR3 and two copies of HIR2 and HPC2. The HIR complex interacts with ASF1. Interacts with SNF2. Interacts with SNF5. Interacts with SWI3. Interacts with RTT106.

The protein resides in the nucleus. The protein localises to the chromosome. Component of the HIR complex, which cooperates with ASF1 to promote replication-independent chromatin assembly. The HIR complex is also required for the periodic repression of three of the four histone gene loci during the cell cycle as well as for autogenous regulation of the HTA1-HTB1 locus by H2A and H2B. DNA-binding by the HIR complex may repress transcription by inhibiting nucleosome remodeling by the SWI/SNF complex. The HIR complex may also be required for transcriptional silencing of centromeric, telomeric and mating-type loci in the absence of CAF-1. The chain is Protein HIR2 (HIR2) from Saccharomyces cerevisiae (strain ATCC 204508 / S288c) (Baker's yeast).